The primary structure comprises 365 residues: Caffeic acid 3-O-methyltransferase (365 aa).

Position 130–136 (130–136 (MNQDKVL)) interacts with substrate. The substrate binding stretch occupies residues 162-180 (AFEYHGTDPRFNKVFNRGM). Residues glycine 208, aspartate 231, aspartate 251, methionine 252, and lysine 265 each contribute to the S-adenosyl-L-methionine site. The active-site Proton acceptor is the histidine 269.

The protein belongs to the class I-like SAM-binding methyltransferase superfamily. Cation-independent O-methyltransferase family. COMT subfamily. In terms of assembly, homodimer.

The enzyme catalyses (E)-caffeate + S-adenosyl-L-methionine = (E)-ferulate + S-adenosyl-L-homocysteine + H(+). It functions in the pathway aromatic compound metabolism; phenylpropanoid biosynthesis. In terms of biological role, catalyzes the conversion of caffeic acid to ferulic acid and of 5-hydroxyferulic acid to sinapic acid. The resulting products may subsequently be converted to the corresponding alcohols that are incorporated into lignins. The protein is Caffeic acid 3-O-methyltransferase (COMT1) of Prunus dulcis (Almond).